We begin with the raw amino-acid sequence, 258 residues long: Imidazole glycerol phosphate synthase subunit HisF (258 aa).

Active-site residues include Asp11 and Asp130.

It belongs to the HisA/HisF family. Heterodimer of HisH and HisF.

The protein localises to the cytoplasm. It carries out the reaction 5-[(5-phospho-1-deoxy-D-ribulos-1-ylimino)methylamino]-1-(5-phospho-beta-D-ribosyl)imidazole-4-carboxamide + L-glutamine = D-erythro-1-(imidazol-4-yl)glycerol 3-phosphate + 5-amino-1-(5-phospho-beta-D-ribosyl)imidazole-4-carboxamide + L-glutamate + H(+). The protein operates within amino-acid biosynthesis; L-histidine biosynthesis; L-histidine from 5-phospho-alpha-D-ribose 1-diphosphate: step 5/9. In terms of biological role, IGPS catalyzes the conversion of PRFAR and glutamine to IGP, AICAR and glutamate. The HisF subunit catalyzes the cyclization activity that produces IGP and AICAR from PRFAR using the ammonia provided by the HisH subunit. The protein is Imidazole glycerol phosphate synthase subunit HisF of Nitrobacter winogradskyi (strain ATCC 25391 / DSM 10237 / CIP 104748 / NCIMB 11846 / Nb-255).